The sequence spans 527 residues: ATP synthase subunit alpha (527 aa).

ATP is bound at residue 172–179 (GDRQTGKT).

It belongs to the ATPase alpha/beta chains family. F-type ATPases have 2 components, CF(1) - the catalytic core - and CF(0) - the membrane proton channel. CF(1) has five subunits: alpha(3), beta(3), gamma(1), delta(1), epsilon(1). CF(0) has three main subunits: a(1), b(2) and c(9-12). The alpha and beta chains form an alternating ring which encloses part of the gamma chain. CF(1) is attached to CF(0) by a central stalk formed by the gamma and epsilon chains, while a peripheral stalk is formed by the delta and b chains.

It localises to the cell inner membrane. It carries out the reaction ATP + H2O + 4 H(+)(in) = ADP + phosphate + 5 H(+)(out). In terms of biological role, produces ATP from ADP in the presence of a proton gradient across the membrane. The alpha chain is a regulatory subunit. This is ATP synthase subunit alpha from Bacteroides fragilis (strain ATCC 25285 / DSM 2151 / CCUG 4856 / JCM 11019 / LMG 10263 / NCTC 9343 / Onslow / VPI 2553 / EN-2).